Consider the following 465-residue polypeptide: MKMTMMCDESIEENNKSSTVELNHNEKDGRIHSIIINFHPITHEQSNNQFYIQTLHEILKYIIDKKLNLVHFETRPTLTLSNANRDVQYSCLITLEANEINMSLLYEELRGNSFISGINLLNNQESEDWYPKHISDLDKCQHLLRKFQPELQTDHPGFHDKVYRERREAIAKIAFQYKYGDRIPEVEYTKEEIETWGLVFTKMKAVHASRACREYIDGFQLLEKYCNYNSESIPQLQTICEFMHRTSGFRIRPVAGLVSPKDFLASLAFRVFQCTQYIRHHSRPMHTPEPDCIHELIGHMPMLVNRQFADFSQELGLASLGASEEEITRLSTLYWFTVEFGLCNENGETRALGAGIMSSYGELENAFSDLSVKEPFNINDAAVQVYDDVGYQKIYFVTESIESMKRELRNYINTSGKSTIPIYDPITETVHMKSRFSIRKELLKHVKEEIGQLDTLLNHSNYTLP.

Fe cation contacts are provided by histidine 294, histidine 299, and glutamate 339.

It belongs to the biopterin-dependent aromatic amino acid hydroxylase family. The cofactor is Fe(2+).

It localises to the cytoplasm. It is found in the perinuclear region. The enzyme catalyses (6R)-L-erythro-5,6,7,8-tetrahydrobiopterin + L-tyrosine + O2 = (4aS,6R)-4a-hydroxy-L-erythro-5,6,7,8-tetrahydrobiopterin + L-dopa. It participates in catecholamine biosynthesis; dopamine biosynthesis; dopamine from L-tyrosine: step 1/2. This chain is Tyrosine 3-monooxygenase (TH), found in Schistosoma mansoni (Blood fluke).